The chain runs to 92 residues: Small ribosomal subunit protein uS19 (92 aa).

Belongs to the universal ribosomal protein uS19 family.

In terms of biological role, protein S19 forms a complex with S13 that binds strongly to the 16S ribosomal RNA. This chain is Small ribosomal subunit protein uS19, found in Brucella anthropi (strain ATCC 49188 / DSM 6882 / CCUG 24695 / JCM 21032 / LMG 3331 / NBRC 15819 / NCTC 12168 / Alc 37) (Ochrobactrum anthropi).